The chain runs to 178 residues: Bifunctional protein PyrR (178 aa).

Substrate is bound by residues 41–42, 103–111, and Arg-136; these read RR and DDVLYTGRT. Positions 99–111 match the PRPP-binding motif; sequence VILVDDVLYTGRT.

It belongs to the purine/pyrimidine phosphoribosyltransferase family. PyrR subfamily. As to quaternary structure, homodimer and homohexamer; in equilibrium.

It catalyses the reaction UMP + diphosphate = 5-phospho-alpha-D-ribose 1-diphosphate + uracil. In terms of biological role, regulates transcriptional attenuation of the pyrimidine nucleotide (pyr) operon by binding in a uridine-dependent manner to specific sites on pyr mRNA. This disrupts an antiterminator hairpin in the RNA and favors formation of a downstream transcription terminator, leading to a reduced expression of downstream genes. Its function is as follows. Also displays a weak uracil phosphoribosyltransferase activity which is not physiologically significant. The sequence is that of Bifunctional protein PyrR from Clostridium acetobutylicum (strain ATCC 824 / DSM 792 / JCM 1419 / IAM 19013 / LMG 5710 / NBRC 13948 / NRRL B-527 / VKM B-1787 / 2291 / W).